The sequence spans 1010 residues: Trifunctional purine biosynthetic protein adenosine-3 (1010 aa).

At alanine 2 the chain carries N-acetylalanine. Phosphoserine is present on serine 10. Positions 111–318 (KEFMDRHGIP…LYEVIQSTLD (208 aa)) constitute an ATP-grasp domain. ATP contacts are provided by residues 190-193 (EELL), glutamate 197, arginine 220, and asparagine 229. Glutamate 288 and asparagine 290 together coordinate Mg(2+). Lysine 350 is modified (N6-acetyllysine). Residues 434 to 809 (SLTYKESGVD…HFSFEKKKAR (376 aa)) are AIRS domain. Serine 440 carries the phosphoserine modification. A Phosphothreonine modification is found at threonine 682. Phosphoserine is present on residues serine 796 and serine 802. The tract at residues 810-1010 (VAVLISGTGS…NGKICWVKEE (201 aa)) is GART domain. Residue 818–820 (GSN) coordinates N(1)-(5-phospho-beta-D-ribosyl)glycinamide. Residues arginine 871, 896–899 (MRIL), and asparagine 913 each bind (6R)-10-formyltetrahydrofolate. Histidine 915 functions as the Proton donor in the catalytic mechanism. A (6R)-10-formyltetrahydrofolate-binding site is contributed by 947–951 (AEDVD). 977–980 (KLAE) is a N(1)-(5-phospho-beta-D-ribosyl)glycinamide binding site.

The protein in the N-terminal section; belongs to the GARS family. This sequence in the central section; belongs to the AIR synthase family. In the C-terminal section; belongs to the GART family. As to quaternary structure, homodimer. It depends on Mg(2+) as a cofactor. The cofactor is Mn(2+).

It catalyses the reaction 5-phospho-beta-D-ribosylamine + glycine + ATP = N(1)-(5-phospho-beta-D-ribosyl)glycinamide + ADP + phosphate + H(+). The catalysed reaction is N(1)-(5-phospho-beta-D-ribosyl)glycinamide + (6R)-10-formyltetrahydrofolate = N(2)-formyl-N(1)-(5-phospho-beta-D-ribosyl)glycinamide + (6S)-5,6,7,8-tetrahydrofolate + H(+). The enzyme catalyses 2-formamido-N(1)-(5-O-phospho-beta-D-ribosyl)acetamidine + ATP = 5-amino-1-(5-phospho-beta-D-ribosyl)imidazole + ADP + phosphate + H(+). It functions in the pathway purine metabolism; IMP biosynthesis via de novo pathway; 5-amino-1-(5-phospho-D-ribosyl)imidazole from N(2)-formyl-N(1)-(5-phospho-D-ribosyl)glycinamide: step 2/2. It participates in purine metabolism; IMP biosynthesis via de novo pathway; N(1)-(5-phospho-D-ribosyl)glycinamide from 5-phospho-alpha-D-ribose 1-diphosphate: step 2/2. Its pathway is purine metabolism; IMP biosynthesis via de novo pathway; N(2)-formyl-N(1)-(5-phospho-D-ribosyl)glycinamide from N(1)-(5-phospho-D-ribosyl)glycinamide (10-formyl THF route): step 1/1. Its function is as follows. Trifunctional enzyme that catalyzes three distinct reactions as part of the 'de novo' inosine monophosphate biosynthetic pathway. In Homo sapiens (Human), this protein is Trifunctional purine biosynthetic protein adenosine-3 (GART).